The sequence spans 327 residues: Interleukin-12 subunit beta (327 aa).

The first 22 residues, 1 to 22, serve as a signal peptide directing secretion; sequence MHPQQLVVSWFSLVLLASPIVA. Positions 23–106 constitute an Ig-like C2-type domain; it reads MWELEKNVYV…LSRSLLLLHK (84 aa). Cysteines 50 and 90 form a disulfide. A glycan (N-linked (GlcNAc...) asparagine) is linked at Asn-223. The region spanning 238 to 327 is the Fibronectin type-III domain; it reads PPKNLQLRPL…WSEWASVSCS (90 aa).

This sequence belongs to the IL-12B family. As to quaternary structure, heterodimer with IL12A; disulfide-linked. The heterodimer is known as interleukin IL-12. Heterodimer with IL23A; disulfide-linked. The heterodimer is known as interleukin IL-23. Also secreted as a monomer. Interacts with NBR1; this interaction promotes IL-12 secretion.

It is found in the secreted. Its function is as follows. Cytokine that can act as a growth factor for activated T and NK cells, enhance the lytic activity of NK/lymphokine-activated killer cells, and stimulate the production of IFN-gamma by resting PBMC. Functionally, associates with IL23A to form the IL-23 interleukin, a heterodimeric cytokine which functions in innate and adaptive immunity. IL-23 may constitute with IL-17 an acute response to infection in peripheral tissues. IL-23 binds to a heterodimeric receptor complex composed of IL12RB1 and IL23R, activates the Jak-Stat signaling cascade, stimulates memory rather than naive T-cells and promotes production of pro-inflammatory cytokines. IL-23 induces autoimmune inflammation and thus may be responsible for autoimmune inflammatory diseases and may be important for tumorigenesis. The sequence is that of Interleukin-12 subunit beta (IL12B) from Bos taurus (Bovine).